We begin with the raw amino-acid sequence, 672 residues long: Zinc finger protein 271 (672 aa).

The tract at residues 1 to 29 (MEIQFNYESQEHHLLSDGENKTKIGKPAS) is disordered. The segment covering 9–22 (SQEHHLLSDGENKT) has biased composition (basic and acidic residues). The segment at 80-102 (HNCDEYGQSFVWNTGLFRHRKTH) adopts a C2H2-type 1; degenerate zinc-finger fold. 19 consecutive C2H2-type zinc fingers follow at residues 107 to 129 (YECD…QRIH), 135 to 157 (YSCN…QRVH), 163 to 185 (YKCD…QRIH), 191 to 213 (YQCS…QRIH), 219 to 241 (YTCN…QRIH), 247 to 269 (YKCD…QRIH), 275 to 297 (YPCN…RRIH), 303 to 325 (YKCN…QRIH), 331 to 353 (YPCD…QRIH), 359 to 381 (YPCN…HRIH), 387 to 409 (YECD…QRIH), 415 to 437 (YPCS…QRIH), 443 to 465 (YACN…QRVH), 471 to 493 (YHCN…QRIH), 499 to 521 (YLCT…QRIH), 527 to 549 (YKCS…QRIH), 555 to 577 (NPCN…QKIH), 583 to 605 (YKCD…QKIH), and 611 to 633 (YRCV…EEVH).

The protein belongs to the krueppel C2H2-type zinc-finger protein family.

The protein resides in the nucleus. In terms of biological role, may be involved in transcriptional regulation. The protein is Zinc finger protein 271 (ZNF271) of Pongo abelii (Sumatran orangutan).